The chain runs to 718 residues: MSASDLHPVQAGAPQGRRQILVTSALPYANGQIHIGHLVEYIQTDIWARTMRMHGHEIYYIGADDTHGTPVMLRAEQEGVSPKQLIERVWREHKRDFDSFGVSFDNFYTTDSDENRVLSEKIYLALKEAGFIAEREIEQAYDPVKQMFLPDRFIKGECPKCHAKDQYGDSCEVCGTTYQPTDLVNPYSVVSGATPVRKTSTHHFFRLSDPRCEAFLREWVSGLAQPEATNKMREWLGDAGEAKLADWDISRDAPYFGFEIPGAPGKYFYVWLDAPVGYYASFKNLCERRGLDFDAWISKDSTTEQYHFIGKDILYFHTLFWPAMLEFSGHRTPTNVFAHGFLTVDGAKMSKSRGTFITAQSYIDAGLNPEWLRYYFAAKLNATMEDIDLNLEDFQARVNSDLVGKYVNIASRAAGFLIKRFDGRVQASATNHPLLVTLRDAIPQIAAHYEAREYGRALRQTMELADAVNGYVDTAKPWELAKDPANAVALHETCTVSLEAFRLLSLALKPVLPRVAEGVEAFLGIAPLTWADANKPLSSEQPIRAYQHLMTRVDPKQIDALLAANRSSLQGAAAADAAGATNGNGAKAAKSAKAANAASADDEASPFISIDDFAKIDLRIAKIVACQAVEGSDKLLQLTLDVGEEKTRNVFSGIKSAYQPEQLVGKLTVMVANLAPRKMKFGLSEGMVLAASAADEKAEPGLYILEPHSGAKPGMRVK.

The short motif at 27-37 (PYANGQIHIGH) is the 'HIGH' region element. Positions 158, 161, 171, and 174 each coordinate Zn(2+). A 'KMSKS' region motif is present at residues 348–352 (KMSKS). Lys-351 serves as a coordination point for ATP. Positions 612–718 (DFAKIDLRIA…SGAKPGMRVK (107 aa)) constitute a tRNA-binding domain.

Belongs to the class-I aminoacyl-tRNA synthetase family. MetG type 1 subfamily. In terms of assembly, homodimer. Zn(2+) is required as a cofactor.

The protein localises to the cytoplasm. It catalyses the reaction tRNA(Met) + L-methionine + ATP = L-methionyl-tRNA(Met) + AMP + diphosphate. In terms of biological role, is required not only for elongation of protein synthesis but also for the initiation of all mRNA translation through initiator tRNA(fMet) aminoacylation. The polypeptide is Methionine--tRNA ligase (Burkholderia thailandensis (strain ATCC 700388 / DSM 13276 / CCUG 48851 / CIP 106301 / E264)).